The primary structure comprises 177 residues: UPF0102 protein BPP4042 (177 aa).

Residues 13-43 (AAQAQRRLHRRPPASPRASPGARDGGSPTQR) are disordered.

This sequence belongs to the UPF0102 family.

This Bordetella parapertussis (strain 12822 / ATCC BAA-587 / NCTC 13253) protein is UPF0102 protein BPP4042.